Here is a 235-residue protein sequence, read N- to C-terminus: uncharacterized protein (235 aa).

To E.coli YbeR.

This is an uncharacterized protein from Escherichia coli (strain K12).